A 256-amino-acid polypeptide reads, in one-letter code: DNA repair protein RecO (256 aa).

It belongs to the RecO family.

Involved in DNA repair and RecF pathway recombination. The chain is DNA repair protein RecO from Rhizobium etli (strain CIAT 652).